Consider the following 273-residue polypeptide: 4-hydroxy-tetrahydrodipicolinate reductase (273 aa).

NAD(+) is bound by residues 12–17 and glutamate 38; that span reads GAGGRM. Arginine 39 is a binding site for NADP(+). Residues 102–104 and 126–129 each bind NAD(+); these read GTT and AANF. The Proton donor/acceptor role is filled by histidine 159. Residue histidine 160 coordinates (S)-2,3,4,5-tetrahydrodipicolinate. Catalysis depends on lysine 163, which acts as the Proton donor. 169–170 serves as a coordination point for (S)-2,3,4,5-tetrahydrodipicolinate; it reads GT.

The protein belongs to the DapB family. As to quaternary structure, homotetramer.

The protein resides in the cytoplasm. The catalysed reaction is (S)-2,3,4,5-tetrahydrodipicolinate + NAD(+) + H2O = (2S,4S)-4-hydroxy-2,3,4,5-tetrahydrodipicolinate + NADH + H(+). It carries out the reaction (S)-2,3,4,5-tetrahydrodipicolinate + NADP(+) + H2O = (2S,4S)-4-hydroxy-2,3,4,5-tetrahydrodipicolinate + NADPH + H(+). It functions in the pathway amino-acid biosynthesis; L-lysine biosynthesis via DAP pathway; (S)-tetrahydrodipicolinate from L-aspartate: step 4/4. Functionally, catalyzes the conversion of 4-hydroxy-tetrahydrodipicolinate (HTPA) to tetrahydrodipicolinate. The chain is 4-hydroxy-tetrahydrodipicolinate reductase from Salmonella typhimurium (strain LT2 / SGSC1412 / ATCC 700720).